A 304-amino-acid chain; its full sequence is Putative S-adenosyl-L-methionine-dependent methyltransferase MSMEG_1482/MSMEI_1446 (304 aa).

S-adenosyl-L-methionine-binding positions include aspartate 130 and 159–160; that span reads DL.

Belongs to the UPF0677 family.

Its function is as follows. Exhibits S-adenosyl-L-methionine-dependent methyltransferase activity. The chain is Putative S-adenosyl-L-methionine-dependent methyltransferase MSMEG_1482/MSMEI_1446 from Mycolicibacterium smegmatis (strain ATCC 700084 / mc(2)155) (Mycobacterium smegmatis).